The sequence spans 243 residues: UPF0758 protein Tery_2667 (243 aa).

The region spanning 113-235 is the MPN domain; the sequence is VVESPQAAAD…HSSLRQITNL (123 aa). His-184, His-186, and Asp-197 together coordinate Zn(2+). The JAMM motif motif lies at 184-197; it reads HNHPSGNVEPSPED.

The protein belongs to the UPF0758 family.

This Trichodesmium erythraeum (strain IMS101) protein is UPF0758 protein Tery_2667.